Here is a 381-residue protein sequence, read N- to C-terminus: Deoxyguanosinetriphosphate triphosphohydrolase-like protein (381 aa).

Positions 76–203 constitute an HD domain; it reads RMTHTLEVAG…ADLSDEIAYT (128 aa).

The protein belongs to the dGTPase family. Type 2 subfamily.

This Leptospira borgpetersenii serovar Hardjo-bovis (strain JB197) protein is Deoxyguanosinetriphosphate triphosphohydrolase-like protein.